The chain runs to 240 residues: Membrane-spanning 4-domains subfamily A member 7 (240 aa).

Topologically, residues 1–47 (MLLQSQTMGVSHSFTPKGITIPQREKPGHMYQNEDYLQNGLPTETTV) are cytoplasmic. The chain crosses the membrane as a helical span at residues 48–68 (LGTVQILCCLLISSLGAILVF). Residues 69–83 (APYPSHFNPAISTTL) are Extracellular-facing. A helical membrane pass occupies residues 84 to 104 (MSGYPFLGALCFGITGSLSII). Topologically, residues 105-121 (SGKQSTKPFDLSSLTSN) are cytoplasmic. Residues 122–142 (AVSSVTAGAGLFLLADSMVAL) traverse the membrane as a helical segment. Residues 143–178 (RTASQHCGSEMDYLSSLPYSEYYYPIYEIKDCLLTS) lie on the Extracellular side of the membrane. The helical transmembrane segment at 179 to 199 (VSLTGVLVVMLIFTVLELLLA) threads the bilayer. The Cytoplasmic segment spans residues 200–240 (AYSSVFWWKQLYSNNPGSSFSSTQSQDHIQQVKKSSSRSWI). The segment at 218–240 (SFSSTQSQDHIQQVKKSSSRSWI) is disordered.

Belongs to the MS4A family. In terms of tissue distribution, ubiquitous expression in normal tissues. Expression is more elevated in adult liver, lung, spleen, and heart than in their fetal counterparts, and is higher in normal tissues than in the cancerous tissue or cell lines. Low levels of expression were detected in the promonocytic stage, whereas high levels of expression were detected in mature monocytes.

Its subcellular location is the membrane. In terms of biological role, may be involved in signal transduction as a component of a multimeric receptor complex. The chain is Membrane-spanning 4-domains subfamily A member 7 (MS4A7) from Homo sapiens (Human).